A 293-amino-acid chain; its full sequence is tRNA pseudouridine synthase A (293 aa).

The Nucleophile role is filled by Asp-60. Tyr-118 lines the substrate pocket.

Belongs to the tRNA pseudouridine synthase TruA family. Homodimer.

The catalysed reaction is uridine(38/39/40) in tRNA = pseudouridine(38/39/40) in tRNA. In terms of biological role, formation of pseudouridine at positions 38, 39 and 40 in the anticodon stem and loop of transfer RNAs. This chain is tRNA pseudouridine synthase A, found in Rippkaea orientalis (strain PCC 8801 / RF-1) (Cyanothece sp. (strain PCC 8801)).